The sequence spans 250 residues: PF03932 family protein CutC (250 aa).

The protein belongs to the CutC family.

Its subcellular location is the cytoplasm. This Vibrio vulnificus (strain YJ016) protein is PF03932 family protein CutC.